The sequence spans 396 residues: L-lactate dehydrogenase (396 aa).

The 380-residue stretch at 1–380 folds into the FMN hydroxy acid dehydrogenase domain; sequence MIISAASDYR…SQDSLVQELD (380 aa). Tyrosine 24 serves as a coordination point for substrate. Positions 106 and 127 each coordinate FMN. Tyrosine 129 is a binding site for substrate. An FMN-binding site is contributed by threonine 155. Substrate is bound at residue arginine 164. FMN is bound at residue lysine 251. Histidine 275 acts as the Proton acceptor in catalysis. Residue arginine 278 coordinates substrate. 306–330 is an FMN binding site; sequence DSGIRNGLDVVRMIALGADTVLLGR.

The protein belongs to the FMN-dependent alpha-hydroxy acid dehydrogenase family. FMN is required as a cofactor.

The protein resides in the cell inner membrane. It catalyses the reaction (S)-lactate + A = pyruvate + AH2. In terms of biological role, catalyzes the conversion of L-lactate to pyruvate. Is coupled to the respiratory chain. This Escherichia fergusonii (strain ATCC 35469 / DSM 13698 / CCUG 18766 / IAM 14443 / JCM 21226 / LMG 7866 / NBRC 102419 / NCTC 12128 / CDC 0568-73) protein is L-lactate dehydrogenase.